Reading from the N-terminus, the 554-residue chain is Probable ATP-binding cassette sub-family F member 3 homolog (554 aa).

2 consecutive ABC transporter domains span residues 89–285 (GDLH…ASAR) and 351–554 (IEFV…GLGV). ATP contacts are provided by residues 122 to 129 (GRNGIGKT) and 383 to 390 (GANGQGKS).

This sequence belongs to the ABC transporter superfamily. ABCF family. EF3 subfamily.

The sequence is that of Probable ATP-binding cassette sub-family F member 3 homolog from Encephalitozoon cuniculi (strain GB-M1) (Microsporidian parasite).